The following is a 773-amino-acid chain: MILDADYITEDGKPVIRVFKKEKGEFKIDYDRDFEPYIYALLKDDSAIEDIKKITAERHGTTVRVTRAERVKKKFLGRPVEVWKLYFTHPQDVPAIRDKIREHPAVVDIYEYDIPFAKRYLIDRGLIPMEGDEELRMLAFDIETLYHEGEEFGEGPILMISYADEEGARVITWKNIDLPYVESVSTEKEMIKRFLKVIQEKDPDVLITYNGDNFDFAYLKKRSEMLGVKFILGRDGSEPKIQRMGDRFAVEVKGRIHFDLYPVIRRTINLPTYTLETVYEPVFGQPKEKVYAEEIARAWESGEGLERVARYSMEDAKATYELGKEFFPMEAQLSRLVGQSLWDVSRSSTGNLVEWFLLRKAYERNDVAPNKPDERELARRTESYAGGYVKEPEKGLWENIVYLDYKSLYPSIIITHNVSPDTLNREGCREYDVAPQVGHRFCKDFPGFIPSLLGDLLEERQKVKKKMKATVDPIERKLLDYRQRAIKILANSYYGYYAYANARWYCRECAESVTAWGRQYIETTMREIEEKFGFKVLYADTDGFFATIPGADAETVKNKAKEFLNYINPRLPGLLELEYEGFYRRGFFVTKKKYAVIDEEDKITTRGLEIVRRDWSEIAKETQARVLEAILKHGDVEEAVRIVKEVTEKLSRHEVPPEKLVIYEQITRDLRSYRATGPHVAVAKRLAARGIKIRPGTVISYIVLKGPGRVGDRAIPFDEFDPAKHRYDAEYYIENQVLPAVERILRAFGYRKEDLRYQKTKQAGLGAWLKPKT.

The N-terminal domain stretch occupies residues 1-131 (MILDADYITE…IDRGLIPMEG (131 aa)). An exonuclease domain region spans residues 133–385 (EELRMLAFDI…ELARRTESYA (253 aa)). Mg(2+) is bound by residues D141, E143, and D315. The segment at 390-773 (KEPEKGLWEN…GLGAWLKPKT (384 aa)) is polymerase domain. 2 cysteine pairs are disulfide-bonded: C428–C442 and C506–C509.

The protein belongs to the DNA polymerase type-B family. Mg(2+) is required as a cofactor.

The enzyme catalyses DNA(n) + a 2'-deoxyribonucleoside 5'-triphosphate = DNA(n+1) + diphosphate. With respect to regulation, DNA polymerase activity strongly inhibited by uracil-containing oligonucleotides. Functionally, thermostable DNA polymerase. In addition to polymerase activity, this DNA polymerase exhibits 3' to 5' exonuclease activity. The protein is DNA polymerase (pol) of Desulfurococcus sp. (strain Tok).